Here is a 1123-residue protein sequence, read N- to C-terminus: MKNLGGLFKILLLFFCLFLSTHIISVSCLNSDGLTLLSLLKHLDRVPPQVTSTWKINASEATPCNWFGITCDDSKNVASLNFTRSRVSGQLGPEIGELKSLQILDLSTNNFSGTIPSTLGNCTKLATLDLSENGFSDKIPDTLDSLKRLEVLYLYINFLTGELPESLFRIPKLQVLYLDYNNLTGPIPQSIGDAKELVELSMYANQFSGNIPESIGNSSSLQILYLHRNKLVGSLPESLNLLGNLTTLFVGNNSLQGPVRFGSPNCKNLLTLDLSYNEFEGGVPPALGNCSSLDALVIVSGNLSGTIPSSLGMLKNLTILNLSENRLSGSIPAELGNCSSLNLLKLNDNQLVGGIPSALGKLRKLESLELFENRFSGEIPIEIWKSQSLTQLLVYQNNLTGELPVEMTEMKKLKIATLFNNSFYGAIPPGLGVNSSLEEVDFIGNKLTGEIPPNLCHGRKLRILNLGSNLLHGTIPASIGHCKTIRRFILRENNLSGLLPEFSQDHSLSFLDFNSNNFEGPIPGSLGSCKNLSSINLSRNRFTGQIPPQLGNLQNLGYMNLSRNLLEGSLPAQLSNCVSLERFDVGFNSLNGSVPSNFSNWKGLTTLVLSENRFSGGIPQFLPELKKLSTLQIARNAFGGEIPSSIGLIEDLIYDLDLSGNGLTGEIPAKLGDLIKLTRLNISNNNLTGSLSVLKGLTSLLHVDVSNNQFTGPIPDNLEGQLLSEPSSFSGNPNLCIPHSFSASNNSRSALKYCKDQSKSRKSGLSTWQIVLIAVLSSLLVLVVVLALVFICLRRRKGRPEKDAYVFTQEEGPSLLLNKVLAATDNLNEKYTIGRGAHGIVYRASLGSGKVYAVKRLVFASHIRANQSMMREIDTIGKVRHRNLIKLEGFWLRKDDGLMLYRYMPKGSLYDVLHGVSPKENVLDWSARYNVALGVAHGLAYLHYDCHPPIVHRDIKPENILMDSDLEPHIGDFGLARLLDDSTVSTATVTGTTGYIAPENAFKTVRGRESDVYSYGVVLLELVTRKRAVDKSFPESTDIVSWVRSALSSSNNNVEDMVTTIVDPILVDELLDSSLREQVMQVTELALSCTQQDPAMRPTMRDAVKLLEDVKHLARSCSSDSVR.

Residues 1–28 (MKNLGGLFKILLLFFCLFLSTHIISVSC) form the signal peptide. At 29-769 (LNSDGLTLLS…SRKSGLSTWQ (741 aa)) the chain is on the extracellular side. The LRR 1 repeat unit spans residues 31–53 (SDGLTLLSLLKHLDRVPPQVTST). N-linked (GlcNAc...) asparagine glycosylation is found at asparagine 57, asparagine 81, asparagine 110, and asparagine 121. LRR repeat units follow at residues 74-98 (SKNV…IGEL), 99-122 (KSLQ…LGNC), 124-145 (KLAT…TLDS), 146-170 (LKRL…LFRI), 171-194 (PKLQ…IGDA), 196-218 (ELVE…IGNS), and 219-243 (SSLQ…NLLG). N-linked (GlcNAc...) asparagine glycosylation is found at asparagine 182 and asparagine 217. Asparagine 244, asparagine 252, asparagine 289, asparagine 302, asparagine 316, asparagine 321, and asparagine 337 each carry an N-linked (GlcNAc...) asparagine glycan. LRR repeat units follow at residues 245–266 (LTTL…SPNC), 267–290 (KNLL…LGNC), 292–314 (SLDA…LGML), 315–338 (KNLT…LGNC), 340–362 (SLNL…LGKL), 363–386 (RKLE…IWKS), 388–410 (SLTQ…MTEM), 412–434 (KLKI…LGVN), 435–458 (SSLE…LCHG), 459–482 (RKLR…IGHC), 484–505 (TIRR…FSQD), 506–529 (HSLS…LGSC), 530–553 (KNLS…LGNL), 554–577 (QNLG…LSNC), 579–600 (SLER…NFSN), 601–625 (WKGL…LPEL), 626–650 (KKLS…GLIE), 652–674 (LIYD…LGDL), 675–696 (IKLT…VLKG), and 697–721 (LTSL…LEGQ). Residues asparagine 398, asparagine 420, and asparagine 434 are each glycosylated (N-linked (GlcNAc...) asparagine). Residue asparagine 494 is glycosylated (N-linked (GlcNAc...) asparagine). N-linked (GlcNAc...) asparagine glycans are attached at residues asparagine 531, asparagine 536, asparagine 560, asparagine 591, and asparagine 597. Residues asparagine 681 and asparagine 686 are each glycosylated (N-linked (GlcNAc...) asparagine). Asparagine 745 is a glycosylation site (N-linked (GlcNAc...) asparagine). Residues 770 to 790 (IVLIAVLSSLLVLVVVLALVF) form a helical membrane-spanning segment. Residues 791–1123 (ICLRRRKGRP…ARSCSSDSVR (333 aa)) lie on the Cytoplasmic side of the membrane. A Phosphothreonine modification is found at threonine 824. In terms of domain architecture, Protein kinase spans 827 to 1115 (LNEKYTIGRG…LLEDVKHLAR (289 aa)). Residues 833 to 841 (IGRGAHGIV) and lysine 855 each bind ATP. 2 positions are modified to phosphotyrosine: tyrosine 901 and tyrosine 941. Catalysis depends on aspartate 954, which acts as the Proton acceptor. At tyrosine 995 the chain carries Phosphotyrosine.

The protein belongs to the protein kinase superfamily. Ser/Thr protein kinase family. Interacts with PEP1 and BAK1. Interacts with BIK1 and PBL1. N-glycosylated.

Its subcellular location is the cell membrane. The enzyme catalyses L-seryl-[protein] + ATP = O-phospho-L-seryl-[protein] + ADP + H(+). It carries out the reaction L-threonyl-[protein] + ATP = O-phospho-L-threonyl-[protein] + ADP + H(+). Functionally, acts as a receptor for PEP defense peptides. Unlike typical immune receptors, senses an endogenous elicitor that potentiates pathogen-associated molecular pattern (PAMP)-inducible plant responses. Involved in PAMP-triggered immunity (PTI) signaling. Interacts with and phosphorylates the kinase BIK1, a central rate-limiting kinase in PTI signaling. In Arabidopsis thaliana (Mouse-ear cress), this protein is Leucine-rich repeat receptor-like protein kinase PEPR1 (PEPR1).